A 62-amino-acid chain; its full sequence is Bacteriocin piscicolin-126 (62 aa).

Residues 1-18 constitute a propeptide that is removed on maturation; it reads MKTVKELSVKEMQLTTGG. Residues C27 and C32 are joined by a disulfide bond.

Its subcellular location is the secreted. Functionally, inhibits the growth of several Gram-positive bacteria, especially the food-borne pathogen L.monocytogenes, but has no effect on the growth of a number of yeasts and Gram-negative bacteria. This is Bacteriocin piscicolin-126 (pisA) from Carnobacterium maltaromaticum (Carnobacterium piscicola).